Consider the following 575-residue polypeptide: Intermediate filament protein ifa-1 (575 aa).

Disordered stretches follow at residues 1–30 (MMEI…TGNV) and 45–72 (SGAG…EKKE). The tract at residues 1 to 72 (MMEITRETMS…RDSREREKKE (72 aa)) is head. Positions 7–17 (ETMSFTSTTPS) are enriched in polar residues. Over residues 63-72 (RDSREREKKE) the composition is skewed to basic and acidic residues. The IF rod domain maps to 69 to 422 (EKKEMSDLND…KMLEGEENRA (354 aa)). The coil 1A stretch occupies residues 73–104 (MSDLNDRLASYIEKVRFLEAQNRKLAADLDAL). The segment at 105–118 (RSKWGKDTHNIRNM) is linker 1. A coil 1B region spans residues 119-256 (YEGELVDAQK…RVHDNEIKEL (138 aa)). The segment at 257–274 (QTLASRDTTPENREFFKN) is linker 12. Residues 275–422 (ELSSAIRDIR…KMLEGEENRA (148 aa)) form a coil 2 region. The segment at 423-572 (GLKQLVEQVV…EERATHIQRQ (150 aa)) is tail. Residues 455–572 (SRQSFQRSAK…EERATHIQRQ (118 aa)) enclose the LTD domain.

It belongs to the intermediate filament family. In terms of assembly, forms some heteromeric filaments with ifb-1. Isoform d is abundantly expressed in the marginal cells of the pharynx, forming apicobasally oriented thick filament bundles that are attached to the apical and basal plasma membrane by hemi-adherens junctions. Expression of isoform c is also seen in the excretory cells and in the uterus. Isoform c is detectable in the amphid sensory neurins and the pharyngeal-intestinal valve. Both isoform c and isoform d are expressed in the rectum and vulva and in some neurons of the tail. In larvae, expression is seen in the excretory cell, the vulva, the rectum and in the thick filament bundles of the pharynx. Expression in pharynx begins in late embryos.

It is found in the cytoplasm. Its function is as follows. Cytoplasmic intermediate filaments make up the structural component of the cytoskeleton providing mechanical strength to cells. Essential protein required during embryogenesis especially for survival past the L1 larva stage, involved in intestine morphogenesis. The chain is Intermediate filament protein ifa-1 (ifa-1) from Caenorhabditis elegans.